Consider the following 71-residue polypeptide: Sec-independent protein translocase protein TatA (71 aa).

The helical transmembrane segment at 1 to 21 (MGSFSLLHWLVVLVIVLLVFG) threads the bilayer. The segment at 43 to 71 (LHEDDKPTDQLGSTSQSTASGPQQDHGKH) is disordered. Over residues 52-65 (QLGSTSQSTASGPQ) the composition is skewed to polar residues.

It belongs to the TatA/E family. In terms of assembly, the Tat system comprises two distinct complexes: a TatABC complex, containing multiple copies of TatA, TatB and TatC subunits, and a separate TatA complex, containing only TatA subunits. Substrates initially bind to the TatABC complex, which probably triggers association of the separate TatA complex to form the active translocon.

It is found in the cell inner membrane. Its function is as follows. Part of the twin-arginine translocation (Tat) system that transports large folded proteins containing a characteristic twin-arginine motif in their signal peptide across membranes. TatA could form the protein-conducting channel of the Tat system. This Xylella fastidiosa (strain M12) protein is Sec-independent protein translocase protein TatA.